Reading from the N-terminus, the 63-residue chain is Conotoxin PnMRCL-0111 (63 aa).

The first 22 residues, 1–22 (MHCLSVFVILLLLTASAPSVDA), serve as a signal peptide directing secretion. The propeptide occupies 23–50 (QPKTEDDVPLSSFHDDLQRTVRTLLDIR). Trp62 is subject to Tryptophan amide.

The protein belongs to the conotoxin T superfamily. Post-translationally, contains 2 disulfide bonds that can be either 'C1-C3, C2-C4' or 'C1-C4, C2-C3', since these disulfide connectivities have been observed for conotoxins with cysteine framework V (for examples, see AC P0DQQ7 and AC P81755). In terms of tissue distribution, expressed by the venom duct.

Its subcellular location is the secreted. This is Conotoxin PnMRCL-0111 from Conus pennaceus (Feathered cone).